Reading from the N-terminus, the 447-residue chain is Elongation factor 1-alpha (447 aa).

Positions 5 to 230 (KFHINIVVIG…DQINDAKRPS (226 aa)) constitute a tr-type G domain. The segment at 14-21 (GHVDSGKS) is G1. 14-21 (GHVDSGKS) provides a ligand contact to GTP. K55 is subject to N6,N6-dimethyllysine. The tract at residues 70-74 (GITID) is G2. K79 carries the N6,N6,N6-trimethyllysine modification. The segment at 91 to 94 (DAPG) is G3. Residues 91–95 (DAPGH) and 153–156 (NKMD) contribute to the GTP site. A G4 region spans residues 153 to 156 (NKMD). K187 bears the N6,N6,N6-trimethyllysine mark. The segment at 194–196 (SGF) is G5. An N6-methyllysine modification is found at K261. A 5-glutamyl glycerylphosphorylethanolamine modification is found at E289. K306 carries the N6,N6,N6-trimethyllysine modification. E362 carries the post-translational modification 5-glutamyl glycerylphosphorylethanolamine. An N6,N6,N6-trimethyllysine modification is found at K396.

Belongs to the TRAFAC class translation factor GTPase superfamily. Classic translation factor GTPase family. EF-Tu/EF-1A subfamily. Was detected in all tissues examined but was most abundant in roots and salt-adapted cultured cells.

Its subcellular location is the cytoplasm. This protein promotes the GTP-dependent binding of aminoacyl-tRNA to the A-site of ribosomes during protein biosynthesis. This Nicotiana tabacum (Common tobacco) protein is Elongation factor 1-alpha.